A 2979-amino-acid polypeptide reads, in one-letter code: Polyketide synthase-nonribosomal peptide synthetase TwmB (2979 aa).

Residues 5 to 435 enclose the Ketosynthase family 3 (KS3) domain; it reads GAEIAIIGSG…GTNAHAILES (431 aa). Residues cysteine 176, histidine 315, and histidine 355 each act as for beta-ketoacyl synthase activity in the active site. The interval 549 to 864 is malonyl-CoA:ACP transacylase (MAT) domain; it reads VFTGQGAQWA…PYTGLFTRGV (316 aa). The For malonyltransferase activity role is filled by serine 643. An N-terminal hotdog fold region spans residues 936–1070; it reads HDLLGHLTPN…GRVRIHLGEA (135 aa). The tract at residues 936 to 1234 is dehydratase (DH) domain; the sequence is HDLLGHLTPN…ECVPFSRQTA (299 aa). Positions 936–1235 constitute a PKS/mFAS DH domain; the sequence is HDLLGHLTPN…CVPFSRQTAK (300 aa). Histidine 968 serves as the catalytic Proton acceptor; for dehydratase activity. The interval 1085 to 1235 is C-terminal hotdog fold; that stretch reads LVSVSEKKFY…CVPFSRQTAK (151 aa). The active-site Proton donor; for dehydratase activity is aspartate 1141. The interval 1387–1572 is inactive methyltransferase (MT) domain; the sequence is NFTAHLAGIL…GIDTSTVEQP (186 aa). A ketoreductase (KR)domain region spans residues 2098–2271; it reads TYWLVGLTGG…AASVMDIGAV (174 aa). The region spanning 2380–2465 is the Carrier domain; it reads RNNEEAYGIV…ELVDTATEAI (86 aa). Serine 2425 carries the O-(pantetheine 4'-phosphoryl)serine modification. Residues 2476 to 2497 form a disordered region; sequence YPAEQTSSQNSDSGQDMASSFD. Residues 2479–2497 show a composition bias toward polar residues; that stretch reads EQTSSQNSDSGQDMASSFD. Residues 2534 to 2970 form a condensation region; sequence KSIPVSFTQA…MTLGQAALAE (437 aa).

Interacts with TwmE. Requires pantetheine 4'-phosphate as cofactor.

It catalyses the reaction 5-aminopentanoate + 7 malonyl-CoA + acetyl-CoA + 11 NADPH + 17 H(+) = wortmanamide A + 7 CO2 + 11 NADP(+) + 8 CoA + 6 H2O. The catalysed reaction is 5-aminopentanoate + 8 malonyl-CoA + acetyl-CoA + 13 NADPH + 20 H(+) = wortmanamide B + 8 CO2 + 13 NADP(+) + 9 CoA + 7 H2O. The protein operates within secondary metabolite biosynthesis. Functionally, polyketide synthase-nonribosomal peptide synthetase; part of the gene cluster that mediates the biosynthesis of wortmanamides A and B, reduced long-chain polyketides amidated with a specific omega-amino acid, 5-aminopentanoic acid (5PA). The PKS modules of TwmB are involved in the synthesis of the polyketide backbone, whereas the non-canonical C domain of TwmB is a bonafide condensation domain that specifically selects 5PA and catalyzes amidation to release polyketide chain. The C domain clearly prefers C16 and C18 fatty acyl substrates, which is consistent with simultaneous formation of both octaketide and nonaketide acyl amides wortmanamides A and B. Because TwmB lacks a designated enoylreductase (ER) domain, the required activity is provided the enoyl reductase TwmE. The roles of the remaining enzymes have still to be clarified. The protein is Polyketide synthase-nonribosomal peptide synthetase TwmB of Talaromyces wortmannii (Penicillium wortmannii).